Reading from the N-terminus, the 88-residue chain is uncharacterized protein (88 aa).

This is an uncharacterized protein from Sputnik virophage.